The primary structure comprises 294 residues: Cytidine deaminase (294 aa).

CMP/dCMP-type deaminase domains are found at residues 48–168 (DDDA…FGPT) and 187–294 (AETD…RVTF). 89-91 (NME) lines the substrate pocket. A Zn(2+)-binding site is contributed by His-102. The active-site Proton donor is the Glu-104. The Zn(2+) site is built by Cys-129 and Cys-132.

The protein belongs to the cytidine and deoxycytidylate deaminase family. Homodimer. Zn(2+) is required as a cofactor.

It carries out the reaction cytidine + H2O + H(+) = uridine + NH4(+). It catalyses the reaction 2'-deoxycytidine + H2O + H(+) = 2'-deoxyuridine + NH4(+). In terms of biological role, this enzyme scavenges exogenous and endogenous cytidine and 2'-deoxycytidine for UMP synthesis. In Yersinia pseudotuberculosis serotype IB (strain PB1/+), this protein is Cytidine deaminase.